We begin with the raw amino-acid sequence, 185 residues long: Ribosome-recycling factor (185 aa).

It belongs to the RRF family.

It localises to the cytoplasm. Its function is as follows. Responsible for the release of ribosomes from messenger RNA at the termination of protein biosynthesis. May increase the efficiency of translation by recycling ribosomes from one round of translation to another. This chain is Ribosome-recycling factor, found in Rhodococcus erythropolis (strain PR4 / NBRC 100887).